A 305-amino-acid chain; its full sequence is tRNA pseudouridine synthase B (305 aa).

The Nucleophile role is filled by Asp-41.

This sequence belongs to the pseudouridine synthase TruB family. Type 1 subfamily.

The enzyme catalyses uridine(55) in tRNA = pseudouridine(55) in tRNA. Responsible for synthesis of pseudouridine from uracil-55 in the psi GC loop of transfer RNAs. This chain is tRNA pseudouridine synthase B, found in Prochlorococcus marinus (strain MIT 9301).